A 328-amino-acid chain; its full sequence is Lipoyl synthase (328 aa).

Residues Cys-56, Cys-61, Cys-67, Cys-82, Cys-86, Cys-89, and Ser-293 each coordinate [4Fe-4S] cluster. A Radical SAM core domain is found at 68–282 (WEDREATFLI…ERVGAELGFS (215 aa)).

This sequence belongs to the radical SAM superfamily. Lipoyl synthase family. It depends on [4Fe-4S] cluster as a cofactor.

The protein resides in the cytoplasm. It catalyses the reaction [[Fe-S] cluster scaffold protein carrying a second [4Fe-4S](2+) cluster] + N(6)-octanoyl-L-lysyl-[protein] + 2 oxidized [2Fe-2S]-[ferredoxin] + 2 S-adenosyl-L-methionine + 4 H(+) = [[Fe-S] cluster scaffold protein] + N(6)-[(R)-dihydrolipoyl]-L-lysyl-[protein] + 4 Fe(3+) + 2 hydrogen sulfide + 2 5'-deoxyadenosine + 2 L-methionine + 2 reduced [2Fe-2S]-[ferredoxin]. The protein operates within protein modification; protein lipoylation via endogenous pathway; protein N(6)-(lipoyl)lysine from octanoyl-[acyl-carrier-protein]: step 2/2. Functionally, catalyzes the radical-mediated insertion of two sulfur atoms into the C-6 and C-8 positions of the octanoyl moiety bound to the lipoyl domains of lipoate-dependent enzymes, thereby converting the octanoylated domains into lipoylated derivatives. The polypeptide is Lipoyl synthase (Frankia alni (strain DSM 45986 / CECT 9034 / ACN14a)).